We begin with the raw amino-acid sequence, 98 residues long: Co-chaperonin GroES (98 aa).

This sequence belongs to the GroES chaperonin family. Heptamer of 7 subunits arranged in a ring. Interacts with the chaperonin GroEL.

Its subcellular location is the cytoplasm. Its function is as follows. Together with the chaperonin GroEL, plays an essential role in assisting protein folding. The GroEL-GroES system forms a nano-cage that allows encapsulation of the non-native substrate proteins and provides a physical environment optimized to promote and accelerate protein folding. GroES binds to the apical surface of the GroEL ring, thereby capping the opening of the GroEL channel. This is Co-chaperonin GroES from Renibacterium salmoninarum (strain ATCC 33209 / DSM 20767 / JCM 11484 / NBRC 15589 / NCIMB 2235).